Consider the following 352-residue polypeptide: Protein RecA (352 aa).

64-71 (GPESSGKT) is an ATP binding site. Positions 328–352 (NPSSVPEAEAEHDPEQDEEPTFDLE) are disordered. Residues 335 to 352 (AEAEHDPEQDEEPTFDLE) show a composition bias toward acidic residues.

Belongs to the RecA family.

The protein localises to the cytoplasm. In terms of biological role, can catalyze the hydrolysis of ATP in the presence of single-stranded DNA, the ATP-dependent uptake of single-stranded DNA by duplex DNA, and the ATP-dependent hybridization of homologous single-stranded DNAs. It interacts with LexA causing its activation and leading to its autocatalytic cleavage. The chain is Protein RecA from Brevibacillus brevis (strain 47 / JCM 6285 / NBRC 100599).